Reading from the N-terminus, the 715-residue chain is Fatty acid oxidation complex subunit alpha (715 aa).

Positions 1–190 (MIYEGKAITV…KVSAVDAVVT (190 aa)) are enoyl-CoA hydratase/isomerase. D297 serves as a coordination point for substrate. The interval 312 to 715 (KDVKQAAVLG…MAKNGQSFFG (404 aa)) is 3-hydroxyacyl-CoA dehydrogenase. Residues M325, D344, 401-403 (VVE), K408, and S430 each bind NAD(+). The active-site For 3-hydroxyacyl-CoA dehydrogenase activity is H451. Position 454 (N454) interacts with NAD(+). The substrate site is built by N501 and Y660.

It in the N-terminal section; belongs to the enoyl-CoA hydratase/isomerase family. This sequence in the C-terminal section; belongs to the 3-hydroxyacyl-CoA dehydrogenase family. As to quaternary structure, heterotetramer of two alpha chains (FadB) and two beta chains (FadA).

It carries out the reaction a (3S)-3-hydroxyacyl-CoA + NAD(+) = a 3-oxoacyl-CoA + NADH + H(+). It catalyses the reaction a (3S)-3-hydroxyacyl-CoA = a (2E)-enoyl-CoA + H2O. The catalysed reaction is a 4-saturated-(3S)-3-hydroxyacyl-CoA = a (3E)-enoyl-CoA + H2O. The enzyme catalyses (3S)-3-hydroxybutanoyl-CoA = (3R)-3-hydroxybutanoyl-CoA. It carries out the reaction a (3Z)-enoyl-CoA = a 4-saturated (2E)-enoyl-CoA. It catalyses the reaction a (3E)-enoyl-CoA = a 4-saturated (2E)-enoyl-CoA. It participates in lipid metabolism; fatty acid beta-oxidation. Its function is as follows. Involved in the aerobic and anaerobic degradation of long-chain fatty acids via beta-oxidation cycle. Catalyzes the formation of 3-oxoacyl-CoA from enoyl-CoA via L-3-hydroxyacyl-CoA. It can also use D-3-hydroxyacyl-CoA and cis-3-enoyl-CoA as substrate. In Pseudomonas fragi, this protein is Fatty acid oxidation complex subunit alpha.